The following is a 353-amino-acid chain: Carbamoyl phosphate synthase small chain (353 aa).

Residues 1–166 (MSDAYLALET…AETHGNGDTT (166 aa)) are CPSase. Residues Ser45, Gly214, and Gly216 each contribute to the L-glutamine site. Residues 166-349 (TVALVDCGAK…LAMADASYTP (184 aa)) enclose the Glutamine amidotransferase type-1 domain. Catalysis depends on Cys241, which acts as the Nucleophile. The L-glutamine site is built by Leu242, Gln245, Asn283, Gly285, and Tyr286. Catalysis depends on residues His322 and Glu324.

It belongs to the CarA family. As to quaternary structure, composed of two chains; the small (or glutamine) chain promotes the hydrolysis of glutamine to ammonia, which is used by the large (or ammonia) chain to synthesize carbamoyl phosphate. Tetramer of heterodimers (alpha,beta)4.

It carries out the reaction hydrogencarbonate + L-glutamine + 2 ATP + H2O = carbamoyl phosphate + L-glutamate + 2 ADP + phosphate + 2 H(+). The catalysed reaction is L-glutamine + H2O = L-glutamate + NH4(+). The protein operates within amino-acid biosynthesis; L-arginine biosynthesis; carbamoyl phosphate from bicarbonate: step 1/1. It participates in pyrimidine metabolism; UMP biosynthesis via de novo pathway; (S)-dihydroorotate from bicarbonate: step 1/3. Small subunit of the glutamine-dependent carbamoyl phosphate synthetase (CPSase). CPSase catalyzes the formation of carbamoyl phosphate from the ammonia moiety of glutamine, carbonate, and phosphate donated by ATP, constituting the first step of 2 biosynthetic pathways, one leading to arginine and/or urea and the other to pyrimidine nucleotides. The small subunit (glutamine amidotransferase) binds and cleaves glutamine to supply the large subunit with the substrate ammonia. The protein is Carbamoyl phosphate synthase small chain of Halobacterium salinarum (strain ATCC 29341 / DSM 671 / R1).